A 338-amino-acid polypeptide reads, in one-letter code: Extracellular globin (338 aa).

The N-terminal stretch at 1–18 (MRSLLLLSIVFFVVTVSA) is a signal peptide. N-linked (GlcNAc...) asparagine glycosylation occurs at N19. 2 consecutive Globin domains span residues 25 to 167 (CMKS…KHGR) and 174 to 316 (CMRS…RHGK). Q82 and H114 together coordinate heme b. N216 carries an N-linked (GlcNAc...) asparagine glycan. Heme b-binding residues include Q231 and H263. Residues 313–338 (RHGKEHHEHKEEHKEEHKEEHKEEQH) form a disordered region.

This sequence belongs to the globin family. As to quaternary structure, homooctamer.

Its subcellular location is the secreted. It localises to the extracellular space. Its function is as follows. Has an extremely high oxygen affinity. In a vacuum, it takes several minutes to release its oxygen compared to milliseconds for a normal globin. Could be used as an oxygen scavenger for sterol biosynthesis. The polypeptide is Extracellular globin (Ascaris suum (Pig roundworm)).